The chain runs to 632 residues: Chaperone protein DnaK (632 aa).

The residue at position 198 (Thr-198) is a Phosphothreonine; by autocatalysis. A disordered region spans residues 599 to 632 (YKKAGASQQGAGSTTQSKKEEDVIEAEVEDKDNK). A compositionally biased stretch (polar residues) spans 604 to 614 (ASQQGAGSTTQ). The span at 620 to 632 (DVIEAEVEDKDNK) shows a compositional bias: acidic residues.

Belongs to the heat shock protein 70 family.

In terms of biological role, acts as a chaperone. The polypeptide is Chaperone protein DnaK (Thermodesulfovibrio yellowstonii (strain ATCC 51303 / DSM 11347 / YP87)).